The chain runs to 470 residues: Cell division protein FtsP (470 aa).

Positions 1–29 (MKNCSRRQLLKTTLFSTALFSVPAPLLAA) form a signal peptide, tat-type signal.

The protein belongs to the FtsP family. In terms of processing, predicted to be exported by the Tat system. The position of the signal peptide cleavage has not been experimentally proven.

It localises to the periplasm. Its function is as follows. Cell division protein that is required for growth during stress conditions. May be involved in protecting or stabilizing the divisomal assembly under conditions of stress. The protein is Cell division protein FtsP of Aggregatibacter aphrophilus (strain NJ8700) (Haemophilus aphrophilus).